The chain runs to 404 residues: tRNA N6-adenosine threonylcarbamoyltransferase, mitochondrial (404 aa).

A mitochondrion-targeting transit peptide spans 1–27 (MFQSCLPGALRSWSRGVFSTSTRPRLV). Residues histidine 135 and histidine 139 each coordinate a divalent metal cation. Substrate contacts are provided by residues 157–161 (LVSGG), aspartate 190, glycine 210, glutamate 214, 317–318 (SN), and threonine 345. Aspartate 346 contacts a divalent metal cation.

The protein belongs to the KAE1 / TsaD family. In terms of assembly, monomer. The cofactor is a divalent metal cation.

It localises to the mitochondrion. The enzyme catalyses L-threonylcarbamoyladenylate + adenosine(37) in tRNA = N(6)-L-threonylcarbamoyladenosine(37) in tRNA + AMP + H(+). Its function is as follows. Required for the formation of a threonylcarbamoyl group on adenosine at position 37 (t(6)A37) in mitochondrial tRNAs that read codons beginning with adenine. Probably involved in the transfer of the threonylcarbamoyl moiety of threonylcarbamoyl-AMP (TC-AMP) to the N6 group of A37. Involved in mitochondrial genome maintenance. The chain is tRNA N6-adenosine threonylcarbamoyltransferase, mitochondrial from Danio rerio (Zebrafish).